We begin with the raw amino-acid sequence, 539 residues long: Glycerophosphoinositol inositolphosphodiesterase GDPD2 (539 aa).

The Cytoplasmic portion of the chain corresponds to 1-40 (MADSPGCCSIWARCLHCLYSCHWRKYPKQKMQTSKCDCIW). A helical transmembrane segment spans residues 41-61 (FGLLFLTFLLSLGWLYIGLIL). Residues 62–83 (LNDLHNFNEFLFRHWGHWMDWS) are Extracellular-facing. A helical transmembrane segment spans residues 84 to 104 (LIVLLVVSLLVTYASLLLLLG). Over 105 to 121 (LLLQLCGQPLHLHSLHK) the chain is Cytoplasmic. The chain crosses the membrane as a helical span at residues 122–142 (VLLLLIVLLVAAGLVGLDIQW). The Extracellular portion of the chain corresponds to 143–154 (RQEWHSLRLSLQ). A helical transmembrane segment spans residues 155-175 (ATAPFLHIGAVAGITLLAWPV). At 176 to 189 (ADTFYRIHPRGPKV) the chain is on the cytoplasmic side. Residues 190 to 210 (LLLLLFFGVTLVIYLMPLLFI) form a helical membrane-spanning segment. Residues 211–491 (SSPCIMKLRD…PLWLLPPQKY (281 aa)) are Extracellular-facing. The 256-residue stretch at 225 to 480 (PGLVGHRGAP…NACQLLQQMQ (256 aa)) folds into the GP-PDE domain. 3 residues coordinate a divalent metal cation: Glu257, Asp259, and His272. Asn333 is a glycosylation site (N-linked (GlcNAc...) asparagine). The chain crosses the membrane as a helical span at residues 492–512 (LMIWVITDCASILLLLSIFLL). Residues 513–539 (RGGCAKRNRTGLETAVLLTKINNFASE) are Cytoplasmic-facing.

Belongs to the glycerophosphoryl diester phosphodiesterase family. Requires Ca(2+) as cofactor. Detected in spleen, femur and calvaria.

Its subcellular location is the cell membrane. The protein resides in the cytoplasm. It is found in the cytoskeleton. It catalyses the reaction sn-glycero-3-phospho-1D-myo-inositol + H2O = 1D-myo-inositol 1-phosphate + glycerol + H(+). In terms of biological role, has glycerophosphoinositol inositolphosphodiesterase activity and specifically hydrolyzes glycerophosphoinositol, with no activity for other substrates such as glycerophosphoinositol 4-phosphate, glycerophosphocholine, glycerophosphoethanolamine, and glycerophosphoserine. Accelerates the program of osteoblast differentiation and growth. May play a role in remodeling of the actin cytoskeleton. The sequence is that of Glycerophosphoinositol inositolphosphodiesterase GDPD2 (Gdpd2) from Mus musculus (Mouse).